We begin with the raw amino-acid sequence, 419 residues long: Glutamate-1-semialdehyde 2,1-aminomutase (419 aa).

The residue at position 259 (Lys259) is an N6-(pyridoxal phosphate)lysine.

This sequence belongs to the class-III pyridoxal-phosphate-dependent aminotransferase family. HemL subfamily. Pyridoxal 5'-phosphate serves as cofactor.

Its subcellular location is the cytoplasm. The enzyme catalyses (S)-4-amino-5-oxopentanoate = 5-aminolevulinate. It functions in the pathway porphyrin-containing compound metabolism; protoporphyrin-IX biosynthesis; 5-aminolevulinate from L-glutamyl-tRNA(Glu): step 2/2. This chain is Glutamate-1-semialdehyde 2,1-aminomutase (hemL), found in Sulfurisphaera tokodaii (strain DSM 16993 / JCM 10545 / NBRC 100140 / 7) (Sulfolobus tokodaii).